Reading from the N-terminus, the 342-residue chain is Phomopsin biosynthesis cluster protein B (342 aa).

The interval 1 to 22 is disordered; sequence MESIAKAKSLPNKGRTYDSQRP. The chain crosses the membrane as a helical span at residues 87-107; sequence VLIIGCAVISLFAIIGALGFA. Residues 118–186 are disordered; the sequence is CASPAHQNPH…QCGESPDEAQ (69 aa). The span at 144-155 shows a compositional bias: low complexity; sequence HSGSHSSSSSTN. N-linked (GlcNAc...) asparagine glycosylation occurs at Asn248.

It localises to the membrane. Part of the gene cluster that mediates the biosynthesis of the phomopsins, a group of hexapeptide mycotoxins which infects lupins and causes lupinosis disease in livestock. The role of phomB within the phomopsins biosynthesis pathway has still to be determined. The pathway starts with the processing of the precursor phomA by several endopeptidases including kexin proteases as well as the cluster-specific S41 family peptidase phomP1 and the oligopeptidase phomG to produce 10 identical copies of the hexapeptide Tyr-Val-Ile-Pro-Ile-Asp. After being excised from the precursor peptide, the core peptides are cyclized and modified post-translationally by enzymes encoded within the gene cluster. The timing and order of proteolysis of the phomA precursor and PTMs are still unknown. Two tyrosinase-like enzymes, phomQ1 and phomQ2, catalyze the chlorination and hydroxylation of Tyr, respectively. PhomYb, is proposed to be involved in the construction of the macrocyclic structure. The other 4 ustYa family proteins may be involved in PTMs that generate the unique structure of phomopsin A. PhomYa is required for the hydroxylation of C-beta of Tyr. PhomYc, phomYd, and phomYe are responsible for the biosynthesis of 2,3-dehydroisoleucine (dIle), 2,3-dehydroaspartic acid (dAsp), and 3,4-dehydroproline (dPro), respectively. While dIle formation by phomYc is indispensable for the installation of dAsp by phomYd, the order of the other PTMs have not been elucidated yet. Most of the biosynthetic enzymes likely have broad substrate specificity, and thus, there might be a metabolic grid from a precursor to phomopsin A. The enzyme(s) responsible for the biosynthesis of 3,4-dehydrovaline (dVal) have also not been identified yet. Finally, phomM acts as an S-adenosylmethionine-dependent alpha-N-methyltransferase that catalyzes two successive N-methylation reactions, converting N-desmethyl-phomopsin A to phomopsin A and phomopsin A further to an N,N-dimethylated congener called phomopsin E. This is Phomopsin biosynthesis cluster protein B from Diaporthe leptostromiformis (Lupinosis disease fungus).